The following is a 429-amino-acid chain: Phosphoribosylamine--glycine ligase (429 aa).

The region spanning 109–316 (KDFLARHQIP…LVDLCLAACD (208 aa)) is the ATP-grasp domain. 135–196 (LREKGAPIVI…EEFLDGEEAS (62 aa)) serves as a coordination point for ATP. Mg(2+)-binding residues include E286 and N288.

The protein belongs to the GARS family. In terms of assembly, monomer. The cofactor is Mg(2+). Requires Mn(2+) as cofactor.

It carries out the reaction 5-phospho-beta-D-ribosylamine + glycine + ATP = N(1)-(5-phospho-beta-D-ribosyl)glycinamide + ADP + phosphate + H(+). Its pathway is purine metabolism; IMP biosynthesis via de novo pathway; N(1)-(5-phospho-D-ribosyl)glycinamide from 5-phospho-alpha-D-ribose 1-diphosphate: step 2/2. This Salmonella typhi protein is Phosphoribosylamine--glycine ligase.